A 230-amino-acid chain; its full sequence is uncharacterized protein (230 aa).

The first 16 residues, 1–16 (MTCVNVCFFLFPPCHR), serve as a signal peptide directing secretion. 4 helical membrane-spanning segments follow: residues 27 to 47 (VDLL…IPLI), 118 to 138 (LFFF…FLFF), 150 to 170 (FPIL…LSFL), and 172 to 191 (SLSH…LRVF).

The protein resides in the cytoplasm. It localises to the nucleus membrane. This is an uncharacterized protein from Schizosaccharomyces pombe (strain 972 / ATCC 24843) (Fission yeast).